Here is a 290-residue protein sequence, read N- to C-terminus: Pyridoxal kinase PdxY (290 aa).

Residues Ser-12 and Thr-47–Gln-48 contribute to the substrate site. ATP is bound by residues Asp-114, Glu-151, Lys-184, and Arg-211–Leu-214. A substrate-binding site is contributed by Asp-225.

This sequence belongs to the pyridoxine kinase family. PdxY subfamily. Homodimer. Requires Mg(2+) as cofactor.

It carries out the reaction pyridoxal + ATP = pyridoxal 5'-phosphate + ADP + H(+). Its pathway is cofactor metabolism; pyridoxal 5'-phosphate salvage; pyridoxal 5'-phosphate from pyridoxal: step 1/1. In terms of biological role, pyridoxal kinase involved in the salvage pathway of pyridoxal 5'-phosphate (PLP). Catalyzes the phosphorylation of pyridoxal to PLP. The protein is Pyridoxal kinase PdxY of Pseudomonas putida (strain GB-1).